Here is a 413-residue protein sequence, read N- to C-terminus: Cell surface GPI-anchored protein ECM33 (413 aa).

Positions 1–20 (MQIKSFLLPIVAALLTSVSA) are cleaved as a signal peptide. 11 N-linked (GlcNAc...) asparagine glycosylation sites follow: Asn93, Asn102, Asn172, Asn209, Asn222, Asn227, Asn279, Asn290, Asn306, Asn322, and Asn382. The interval 347 to 390 (YVCTHPANPSSSSKSGSSTQTGKSDSKSSDGSSSSNSSSSSKKG) is disordered. The segment covering 356-390 (SSSSKSGSSTQTGKSDSKSSDGSSSSNSSSSSKKG) has biased composition (low complexity). The GPI-anchor amidated glycine moiety is linked to residue Gly390. A propeptide spans 391 to 413 (ASNVLVVPGMVLTTALGVLLALI) (removed in mature form).

Belongs to the SPS2 family.

It is found in the cell membrane. Its subcellular location is the secreted. The protein resides in the cell wall. Functionally, cell surface protein required for proper cell wall integrity and for the correct assembly of the mannoprotein outer layer of the cell wall. This Candida albicans (strain SC5314 / ATCC MYA-2876) (Yeast) protein is Cell surface GPI-anchored protein ECM33 (ECM331).